An 89-amino-acid chain; its full sequence is Small ribosomal subunit protein uS15 (89 aa).

Positions 1–21 (MAISQERKNEIIKEYARHEGD) are enriched in basic and acidic residues. Residues 1 to 24 (MAISQERKNEIIKEYARHEGDTGS) are disordered.

This sequence belongs to the universal ribosomal protein uS15 family. Part of the 30S ribosomal subunit. Forms a bridge to the 50S subunit in the 70S ribosome, contacting the 23S rRNA.

One of the primary rRNA binding proteins, it binds directly to 16S rRNA where it helps nucleate assembly of the platform of the 30S subunit by binding and bridging several RNA helices of the 16S rRNA. Its function is as follows. Forms an intersubunit bridge (bridge B4) with the 23S rRNA of the 50S subunit in the ribosome. This Enterococcus faecalis (strain ATCC 700802 / V583) protein is Small ribosomal subunit protein uS15.